We begin with the raw amino-acid sequence, 139 residues long: D-ribose pyranase (139 aa).

H20 serves as the catalytic Proton donor. Residues D28, H106, and 128-130 each bind substrate; that span reads YAN.

This sequence belongs to the RbsD / FucU family. RbsD subfamily. As to quaternary structure, homodecamer.

It is found in the cytoplasm. The catalysed reaction is beta-D-ribopyranose = beta-D-ribofuranose. Its pathway is carbohydrate metabolism; D-ribose degradation; D-ribose 5-phosphate from beta-D-ribopyranose: step 1/2. In terms of biological role, catalyzes the interconversion of beta-pyran and beta-furan forms of D-ribose. This is D-ribose pyranase from Maridesulfovibrio salexigens (strain ATCC 14822 / DSM 2638 / NCIMB 8403 / VKM B-1763) (Desulfovibrio salexigens).